Here is a 187-residue protein sequence, read N- to C-terminus: uncharacterized protein (187 aa).

A helical membrane pass occupies residues 3-23; it reads AIIIFLILFIVGVLIGVGVYY.

The protein resides in the membrane. This is an uncharacterized protein from Methanocaldococcus jannaschii (strain ATCC 43067 / DSM 2661 / JAL-1 / JCM 10045 / NBRC 100440) (Methanococcus jannaschii).